The sequence spans 471 residues: Cysteine--tRNA ligase (471 aa).

Residue C29 coordinates Zn(2+). Residues 31-41 (PTVYNYIHIGN) carry the 'HIGH' region motif. 3 residues coordinate Zn(2+): C209, H234, and E238. A 'KMSKS' region motif is present at residues 266–270 (KMSKS). K269 serves as a coordination point for ATP.

It belongs to the class-I aminoacyl-tRNA synthetase family. In terms of assembly, monomer. It depends on Zn(2+) as a cofactor.

It localises to the cytoplasm. The catalysed reaction is tRNA(Cys) + L-cysteine + ATP = L-cysteinyl-tRNA(Cys) + AMP + diphosphate. The polypeptide is Cysteine--tRNA ligase (Listeria welshimeri serovar 6b (strain ATCC 35897 / DSM 20650 / CCUG 15529 / CIP 8149 / NCTC 11857 / SLCC 5334 / V8)).